The sequence spans 524 residues: Thioredoxin reductase 2, mitochondrial (524 aa).

Residues 1–34 constitute a mitochondrion transit peptide; that stretch reads MVAAMVAALRGPSRRFRPRTRALTRGTRGAASAA. An FAD-binding site is contributed by 41–70; that stretch reads DLLVIGGGSGGLACAKEAAQLGKKVAVADY. N6-succinyllysine is present on Lys79. An intrachain disulfide couples Cys86 to Cys91. 2 positions are modified to N6-succinyllysine: Lys175 and Lys329. Residue His497 is the Proton acceptor of the active site. Residues 522–523 constitute a cross-link (cysteinyl-selenocysteine (Cys-Sec)); sequence CU. Position 523 (Sec523) is a non-standard amino acid, selenocysteine.

The protein belongs to the class-I pyridine nucleotide-disulfide oxidoreductase family. As to quaternary structure, homodimer. The cofactor is FAD. Expressed in liver, heart, testis and kidney.

Its subcellular location is the mitochondrion. It carries out the reaction [thioredoxin]-dithiol + NADP(+) = [thioredoxin]-disulfide + NADPH + H(+). Functionally, involved in the control of reactive oxygen species levels and the regulation of mitochondrial redox homeostasis. Maintains thioredoxin in a reduced state. May play a role in redox-regulated cell signaling. The polypeptide is Thioredoxin reductase 2, mitochondrial (Mus musculus (Mouse)).